Consider the following 185-residue polypeptide: Ribosome-recycling factor (185 aa).

Belongs to the RRF family.

Its subcellular location is the cytoplasm. Responsible for the release of ribosomes from messenger RNA at the termination of protein biosynthesis. May increase the efficiency of translation by recycling ribosomes from one round of translation to another. This chain is Ribosome-recycling factor, found in Desulforapulum autotrophicum (strain ATCC 43914 / DSM 3382 / VKM B-1955 / HRM2) (Desulfobacterium autotrophicum).